Here is a 134-residue protein sequence, read N- to C-terminus: Large-conductance mechanosensitive channel (134 aa).

2 helical membrane-spanning segments follow: residues 16–36 (VIDL…VTAL) and 81–101 (GDFI…FIIV).

Belongs to the MscL family. As to quaternary structure, homopentamer.

It localises to the cell inner membrane. In terms of biological role, channel that opens in response to stretch forces in the membrane lipid bilayer. May participate in the regulation of osmotic pressure changes within the cell. In Xylella fastidiosa (strain Temecula1 / ATCC 700964), this protein is Large-conductance mechanosensitive channel.